The following is a 321-amino-acid chain: Lipoyl synthase (321 aa).

[4Fe-4S] cluster-binding residues include C68, C73, C79, C94, C98, C101, and S308. The region spanning 80-297 is the Radical SAM core domain; sequence FNHGTATFMI…KAIALDLGFT (218 aa).

Belongs to the radical SAM superfamily. Lipoyl synthase family. Requires [4Fe-4S] cluster as cofactor.

Its subcellular location is the cytoplasm. It carries out the reaction [[Fe-S] cluster scaffold protein carrying a second [4Fe-4S](2+) cluster] + N(6)-octanoyl-L-lysyl-[protein] + 2 oxidized [2Fe-2S]-[ferredoxin] + 2 S-adenosyl-L-methionine + 4 H(+) = [[Fe-S] cluster scaffold protein] + N(6)-[(R)-dihydrolipoyl]-L-lysyl-[protein] + 4 Fe(3+) + 2 hydrogen sulfide + 2 5'-deoxyadenosine + 2 L-methionine + 2 reduced [2Fe-2S]-[ferredoxin]. The protein operates within protein modification; protein lipoylation via endogenous pathway; protein N(6)-(lipoyl)lysine from octanoyl-[acyl-carrier-protein]: step 2/2. Its function is as follows. Catalyzes the radical-mediated insertion of two sulfur atoms into the C-6 and C-8 positions of the octanoyl moiety bound to the lipoyl domains of lipoate-dependent enzymes, thereby converting the octanoylated domains into lipoylated derivatives. This chain is Lipoyl synthase, found in Tolumonas auensis (strain DSM 9187 / NBRC 110442 / TA 4).